The primary structure comprises 316 residues: MLKILFHTMTLFGHLLSTPVYMVGDACGKDRDEYRNPPLKAFSIESQFLQIENADFKTLPNQSLGYRQTDTMFFATLPVTDMSGFLVSARYLGAEVLWKSSKDLQNTDPHALGYFAFQDKSFYQYVSLSAGAYTLALTNWQWSVLFSGMVDPENIEMGSGVYQVVLSSKYHASEAFAVVIGVINEVGLHDKQAWPLLGFSYKPEDKLTLNCIYPVNFSAEYQCTSVCDLGAAYRLTRFRKKFPKNSLTTSEGIFEYSGREIEGSVKLIFWPGQSLKVFGGYSVGNDISLTNPHNEDEKIYKFGSSLFFGGSANLHF.

Belongs to the chlamydial CPn_0441/CT_007/TC_0275 family.

This is an uncharacterized protein from Chlamydia muridarum (strain MoPn / Nigg).